The chain runs to 878 residues: uncharacterized protein (878 aa).

4 disordered regions span residues 58-223 (IGVD…RTKF), 306-494 (KGRL…TSSR), 585-652 (KLLE…SGKL), and 679-709 (PSSM…GGGG). Composition is skewed to low complexity over residues 64-213 (NGNS…SGTS), 314-325 (SNSSQSSDSDYS), and 335-355 (IPNS…PNSN). The span at 362-372 (RNPNQLSSTNV) shows a compositional bias: polar residues. Residues 373–494 (NNNINNSGGS…TPTTPVTSSR (122 aa)) are compositionally biased toward low complexity. Over residues 585 to 595 (KLLEQQKEQQQ) the composition is skewed to basic and acidic residues. Over residues 596 to 605 (KEQQQQQKQQ) the composition is skewed to low complexity. The span at 615–624 (TDDEDEDDDE) shows a compositional bias: acidic residues. 2 stretches are compositionally biased toward low complexity: residues 639-652 (NLSN…SGKL) and 679-704 (PSSM…SSSS).

This is an uncharacterized protein from Dictyostelium discoideum (Social amoeba).